The following is a 254-amino-acid chain: Alcohol dehydrogenase 2 (254 aa).

10-33 (FVAGLGGIGFDTSREIVKSGPKNL) contributes to the NAD(+) binding site. Residue Ser138 coordinates substrate. Catalysis depends on Tyr151, which acts as the Proton acceptor.

Belongs to the short-chain dehydrogenases/reductases (SDR) family. In terms of assembly, homodimer.

It carries out the reaction a primary alcohol + NAD(+) = an aldehyde + NADH + H(+). The enzyme catalyses a secondary alcohol + NAD(+) = a ketone + NADH + H(+). The sequence is that of Alcohol dehydrogenase 2 (Adh2) from Drosophila buzzatii (Fruit fly).